The primary structure comprises 217 residues: D-glycero-beta-D-manno-heptose-1,7-bisphosphate 7-phosphatase (217 aa).

Catalysis depends on aspartate 36, which acts as the Nucleophile. 2 residues coordinate Mg(2+): aspartate 36 and aspartate 38. Substrate contacts are provided by residues 36–38 (DRD), 44–47 (DTDY), 78–81 (TNQS), and 135–136 (RK). The active-site Proton donor is the aspartate 38. Residues aspartate 161 and lysine 162 each coordinate Mg(2+). Lysine 162 lines the substrate pocket.

Belongs to the gmhB family. Monomer. Requires Mg(2+) as cofactor.

The protein resides in the cytoplasm. It carries out the reaction D-glycero-beta-D-manno-heptose 1,7-bisphosphate + H2O = D-glycero-beta-D-manno-heptose 1-phosphate + phosphate. It functions in the pathway nucleotide-sugar biosynthesis; ADP-L-glycero-beta-D-manno-heptose biosynthesis; ADP-L-glycero-beta-D-manno-heptose from D-glycero-beta-D-manno-heptose 7-phosphate: step 2/4. Converts the D-glycero-beta-D-manno-heptose 1,7-bisphosphate (beta-HBP) intermediate into D-glycero-beta-D-manno-heptose 1-phosphate by removing the phosphate group at the C-7 position. This is D-glycero-beta-D-manno-heptose-1,7-bisphosphate 7-phosphatase (gmhB) from Mesorhizobium japonicum (strain LMG 29417 / CECT 9101 / MAFF 303099) (Mesorhizobium loti (strain MAFF 303099)).